The sequence spans 100 residues: Small ribosomal subunit protein uS14 (100 aa).

Belongs to the universal ribosomal protein uS14 family. In terms of assembly, part of the 30S ribosomal subunit. Contacts proteins S3 and S10.

Its function is as follows. Binds 16S rRNA, required for the assembly of 30S particles and may also be responsible for determining the conformation of the 16S rRNA at the A site. This is Small ribosomal subunit protein uS14 from Prochlorococcus marinus subsp. pastoris (strain CCMP1986 / NIES-2087 / MED4).